The primary structure comprises 786 residues: uncharacterized protein (786 aa).

361–362 lines the substrate pocket; that stretch reads WD. Catalysis depends on Glu-488, which acts as the Proton donor. Residue 590 to 591 participates in substrate binding; sequence KQ. Residues 762–786 form a disordered region; sequence TRKPLLPPPPQPPGREPVHRRALAR. The span at 766 to 776 shows a compositional bias: pro residues; sequence LLPPPPQPPGR.

It belongs to the glycosyl hydrolase 65 family.

This is an uncharacterized protein from Mycobacterium tuberculosis (strain CDC 1551 / Oshkosh).